The following is an 85-amino-acid chain: MAHKKGASSSRNGRDSAAQRLGVKRFGGQVVKAGEILVRQRGTHFHPGVNVGRGGDDTLFATSAGTVEFGARRGRRVVNILPVDA.

This sequence belongs to the bacterial ribosomal protein bL27 family.

The protein is Large ribosomal subunit protein bL27 of Mycobacteroides abscessus (strain ATCC 19977 / DSM 44196 / CCUG 20993 / CIP 104536 / JCM 13569 / NCTC 13031 / TMC 1543 / L948) (Mycobacterium abscessus).